A 480-amino-acid chain; its full sequence is Probable ATP-dependent RNA helicase DDX49 (480 aa).

The short motif at 2-30 is the Q motif element; sequence AGFAEIGLSSWLVEQCRQLGLKQPTPVQL. One can recognise a Helicase ATP-binding domain in the interval 33 to 207; it reads IPAILEGRDC…GLATNEPFFW (175 aa). 46 to 53 contributes to the ATP binding site; that stretch reads AKTGSGKT. The DEAD box motif lies at 152–155; sequence DEAD. Residues 218–382 enclose the Helicase C-terminal domain; that stretch reads QLDQRYLLVP…ELVVEEAEVL (165 aa). A disordered region spans residues 438 to 480; that stretch reads QQNRRFKEKVGQTLRRQKAGSTVRRSRPPRSRPQEPAQAEAQD.

It belongs to the DEAD box helicase family. DDX49/DBP8 subfamily.

It localises to the nucleus. The protein resides in the nucleolus. The enzyme catalyses ATP + H2O = ADP + phosphate + H(+). Functionally, ATP-dependent RNA helicase that plays a role in various aspects of RNA metabolism including the regulation of mRNA export and the levels of pre-ribosomal RNA. Regulates the stability and synthesis of pre-ribosomal RNA and thereby regulates cell proliferation. Also possesses antiviral activity by recognizing gammaherpesvirus transcripts in the context of lytic reactivation. The protein is Probable ATP-dependent RNA helicase DDX49 (Ddx49) of Mus musculus (Mouse).